The sequence spans 757 residues: MTSGSVFFYILIIGKYFSHGGGQDVKCSLGYFPCGNITKCLPQLLHCNGVDDCGNQADEDNCGDNNGWSLQFDKYFASYYKMTSQYPFEAETPECLVGSVPVQCLCRGLELDCDETNLRAVPSVSSNVTAMSLQWNLIRKLPPDCFKNYHDLQKLYLQNNKITSISIYAFRGLNSLTKLYLSHNRITFLKPGVFEDLHRLEWLIIEDNHLSRISPPTFYGLNSLILLVLMNNVLTRLPDKPLCQHMPRLHWLDLEGNHIHNLRNLTLISCSNLTVLVMGKNKINHLNENTFAPLQKLDELDLGSNKIENLPPLIFKDLKELSQLNLSYNPIQKIQANQFDYLVKLKSLSLEGIEISNIQQRMFRPLMNLSHIYFKKFQYCGYAPHVRSGKPNTDGISSLENLLASIIQRVFVWVVSAVTCFGNVFVICMRPYIRSENKLYAMSIISLCCADCLMGIYLFVIGGFDLKFRGEYNKHAQLWMESTHCQLVGSLAILSTEVSVLLLTFLTLEKYICIVYPFRCVRPGKCRTITVLILIWITGFIVAFIPLSNKEFFKNYYGTNGVCFPLHSEDTESIGAQVYSVAIFLGINLAAFIIIVFSYGSMFYSVHQSAITATEIRNQVKKEMILAKRFFFIVFTDALCWIPIFVVKFLSLLQVEIPGTITSWVVIFILPINSALNPILYTLTTRPFKEMIHRFWYNYRQRKSMDSKGQKTYAPSFIWVEMWPLQEMPPELMKPGLFTYPCEMSLISQSTRLNSYS.

Residues 1–408 (MTSGSVFFYI…LENLLASIIQ (408 aa)) lie on the Extracellular side of the membrane. The region spanning 26-63 (KCSLGYFPCGNITKCLPQLLHCNGVDDCGNQADEDNCG) is the LDL-receptor class A domain. Disulfide bonds link Cys27–Cys40, Cys34–Cys53, and Cys47–Cys62. The N-linked (GlcNAc...) asparagine glycan is linked to Asn36. Positions 45, 48, 50, 52, 58, and 59 each coordinate Ca(2+). The LRRNT domain occupies 91-127 (ETPECLVGSVPVQCLCRGLELDCDETNLRAVPSVSSN). Asn127 is a glycosylation site (N-linked (GlcNAc...) asparagine). LRR repeat units follow at residues 151-172 (DLQK…AFRG), 175-196 (SLTK…VFED), 199-220 (RLEW…TFYG), 223-244 (SLIL…PLCQ), 248-269 (RLHW…TLIS), 272-293 (NLTV…TFAP), 296-317 (KLDE…IFKD), 320-341 (ELSQ…QFDY), and 344-365 (KLKS…MFRP). Residues Asn264 and Asn272 are each glycosylated (N-linked (GlcNAc...) asparagine). A glycan (N-linked (GlcNAc...) asparagine) is linked at Asn325. Asn368 is a glycosylation site (N-linked (GlcNAc...) asparagine). Residues 409-429 (RVFVWVVSAVTCFGNVFVICM) form a helical membrane-spanning segment. At 430–443 (RPYIRSENKLYAMS) the chain is on the cytoplasmic side. Residues 444-464 (IISLCCADCLMGIYLFVIGGF) traverse the membrane as a helical segment. Topologically, residues 465-486 (DLKFRGEYNKHAQLWMESTHCQ) are extracellular. An intrachain disulfide couples Cys485 to Cys563. The helical transmembrane segment at 487-507 (LVGSLAILSTEVSVLLLTFLT) threads the bilayer. The Cytoplasmic segment spans residues 508 to 527 (LEKYICIVYPFRCVRPGKCR). A helical transmembrane segment spans residues 528 to 548 (TITVLILIWITGFIVAFIPLS). Topologically, residues 549–577 (NKEFFKNYYGTNGVCFPLHSEDTESIGAQ) are extracellular. The helical transmembrane segment at 578–598 (VYSVAIFLGINLAAFIIIVFS) threads the bilayer. Topologically, residues 599–629 (YGSMFYSVHQSAITATEIRNQVKKEMILAKR) are cytoplasmic. The helical transmembrane segment at 630 to 650 (FFFIVFTDALCWIPIFVVKFL) threads the bilayer. Over 651 to 660 (SLLQVEIPGT) the chain is Extracellular. A helical membrane pass occupies residues 661-681 (ITSWVVIFILPINSALNPILY). At 682 to 757 (TLTTRPFKEM…SQSTRLNSYS (76 aa)) the chain is on the cytoplasmic side.

Belongs to the G-protein coupled receptor 1 family. In terms of assembly, interacts with C1QTNF8.

The protein resides in the cell membrane. Its function is as follows. Receptor for relaxins. The activity of this receptor is mediated by G proteins leading to stimulation of adenylate cyclase and an increase of cAMP. Binding of the ligand may also activate a tyrosine kinase pathway that inhibits the activity of a phosphodiesterase that degrades cAMP. This is Relaxin receptor 1 (RXFP1) from Pongo abelii (Sumatran orangutan).